The chain runs to 157 residues: Ribosome maturation factor RimP (157 aa).

The protein belongs to the RimP family.

Its subcellular location is the cytoplasm. Its function is as follows. Required for maturation of 30S ribosomal subunits. The polypeptide is Ribosome maturation factor RimP (Helicobacter hepaticus (strain ATCC 51449 / 3B1)).